Consider the following 239-residue polypeptide: Ribosomal RNA small subunit methyltransferase G (239 aa).

S-adenosyl-L-methionine is bound by residues G79, F84, 130 to 131 (AE), and R149.

The protein belongs to the methyltransferase superfamily. RNA methyltransferase RsmG family.

The protein localises to the cytoplasm. Its function is as follows. Specifically methylates the N7 position of a guanine in 16S rRNA. The sequence is that of Ribosomal RNA small subunit methyltransferase G from Lactobacillus delbrueckii subsp. bulgaricus (strain ATCC 11842 / DSM 20081 / BCRC 10696 / JCM 1002 / NBRC 13953 / NCIMB 11778 / NCTC 12712 / WDCM 00102 / Lb 14).